The sequence spans 188 residues: Ribosome-recycling factor (188 aa).

The protein belongs to the RRF family.

Its subcellular location is the cytoplasm. Responsible for the release of ribosomes from messenger RNA at the termination of protein biosynthesis. May increase the efficiency of translation by recycling ribosomes from one round of translation to another. The polypeptide is Ribosome-recycling factor (Gluconobacter oxydans (strain 621H) (Gluconobacter suboxydans)).